A 279-amino-acid chain; its full sequence is DegV domain-containing protein M6_Spy1246 (279 aa).

One can recognise a DegV domain in the interval 4–278 (IKIVTDSSIT…EGAFAVMVRY (275 aa)). Hexadecanoate-binding residues include threonine 62 and serine 95.

In terms of biological role, may bind long-chain fatty acids, such as palmitate, and may play a role in lipid transport or fatty acid metabolism. This is DegV domain-containing protein M6_Spy1246 from Streptococcus pyogenes serotype M6 (strain ATCC BAA-946 / MGAS10394).